The sequence spans 391 residues: Phosphoglycerate kinase (391 aa).

Substrate contacts are provided by residues 21–23 (DLN), arginine 36, 59–62 (HLGR), arginine 113, and arginine 146. ATP is bound by residues lysine 197, glutamate 319, and 345-348 (GGDT).

The protein belongs to the phosphoglycerate kinase family. Monomer.

It is found in the cytoplasm. It carries out the reaction (2R)-3-phosphoglycerate + ATP = (2R)-3-phospho-glyceroyl phosphate + ADP. It participates in carbohydrate degradation; glycolysis; pyruvate from D-glyceraldehyde 3-phosphate: step 2/5. This is Phosphoglycerate kinase from Pseudoalteromonas translucida (strain TAC 125).